The primary structure comprises 626 residues: METKQFKAESKRLLDLMINSIYTHKEIFLRELISNSSDAIDKIYYKTLTDDSLKFERDDYYIKVVSDKENRVLKIADTGIGMTKEELENNLGVIAKSGSLQFKKENEVKEGYDIIGQFGVGFYSAFLVSDDVTVISKAFGSNEAYKWNSKGAEGYTIEPCEKEAYGTEIILKIKDNTEEENYDEFLEEYTLKSIIKKYSDFIRYPIKMDLTKTKPKEDNKEEFEEYKEEETINSMVPIWRKNKNELKAEDYENFYAEKHYGFDKPIKYIHTSVDGVVSYNAILFIPETTPYDFYTKEYEKGLELYSSGVLIMNKCGDLLPDYFGFVKGIVDSEDLSLNISREILQHDRQLKLIAKNIKTKIKNELESLLKKERDKYEKFYESFGRQLKYGVYSDFGSNKDILQDLLMFYSSKEKKMVTLAEYVSRMPEDQKYIYYAVGESNERIEKLPQIEGVLDKGYEVLYFTDDIDEFAIKMLMNYKEKEFKSVSSGDLGIEGEEKENTSSSDDKENKELFESMKDILSGKVKDVRASKRLKNHPVCLANEGELSIEMEKVLNAMPNNQNIKADKVLEININHDVFKSLKEAYEGDKEKLKLYTDLLYNQALLIEGLAINDPVEFTNNICKIMK.

Residues 1–341 (METKQFKAES…SEDLSLNISR (341 aa)) are a; substrate-binding. The interval 342 to 552 (EILQHDRQLK…EGELSIEMEK (211 aa)) is b. The tract at residues 490-509 (DLGIEGEEKENTSSSDDKEN) is disordered. Basic and acidic residues predominate over residues 498 to 509 (KENTSSSDDKEN). The interval 553-626 (VLNAMPNNQN…FTNNICKIMK (74 aa)) is c.

This sequence belongs to the heat shock protein 90 family. In terms of assembly, homodimer.

The protein resides in the cytoplasm. Functionally, molecular chaperone. Has ATPase activity. This Clostridium botulinum (strain Okra / Type B1) protein is Chaperone protein HtpG.